The sequence spans 311 residues: Mitochondrial arginine transporter BAC1 (311 aa).

3 Solcar repeats span residues 12–101, 111–203, and 219–305; these read FGFY…AKLF, PRPE…LRYH, and VDMG…SMKM. Transmembrane regions (helical) follow at residues 18-38, 76-96, 113-133, 178-197, 222-242, and 288-308; these read YVAG…FDTV, GATS…GIYS, PEII…VLCP, GGSA…FTVY, GIGV…VLPF, and AFPA…MLGI.

It belongs to the mitochondrial carrier (TC 2.A.29) family. High expression in flowers and siliques. Lower expression in leaves and stems.

It is found in the mitochondrion inner membrane. With respect to regulation, inhibited by mercuric chloride. In terms of biological role, mitochondrial arginine transporter that catalyzes the counter-exchange of arginine with lysine, ornithine, arginine and histidine. Substrate preference in reconstituted proteoliposomes is arginine &gt; lysine &gt; ornithine &gt; histidine. May be involved in the delivery of arginine, released from seed reserves, to mitochondrial arginase and the export of ornithine. This Arabidopsis thaliana (Mouse-ear cress) protein is Mitochondrial arginine transporter BAC1 (BAC1).